We begin with the raw amino-acid sequence, 607 residues long: Glutamine--fructose-6-phosphate aminotransferase [isomerizing] (607 aa).

The active-site Nucleophile; for GATase activity is the C2. Residues 2–217 (CGIVGIVGHS…DGDWAVVRRD (216 aa)) form the Glutamine amidotransferase type-2 domain. SIS domains are found at residues 283-422 (LPFD…ARGV) and 455-597 (IARE…VDQP). K602 (for Fru-6P isomerization activity) is an active-site residue.

In terms of assembly, homodimer.

The protein localises to the cytoplasm. The catalysed reaction is D-fructose 6-phosphate + L-glutamine = D-glucosamine 6-phosphate + L-glutamate. Its function is as follows. Catalyzes the first step in hexosamine metabolism, converting fructose-6P into glucosamine-6P using glutamine as a nitrogen source. The chain is Glutamine--fructose-6-phosphate aminotransferase [isomerizing] from Mesorhizobium japonicum (strain LMG 29417 / CECT 9101 / MAFF 303099) (Mesorhizobium loti (strain MAFF 303099)).